We begin with the raw amino-acid sequence, 334 residues long: Cytoskeleton protein RodZ (334 aa).

Over Met-1 to Gly-111 the chain is Cytoplasmic. The 53-residue stretch at Leu-19 to Leu-71 folds into the HTH cro/C1-type domain. A DNA-binding region (H-T-H motif) is located at residues Gln-30–Glu-49. The helical; Signal-anchor for type II membrane protein transmembrane segment at Trp-112–Trp-132 threads the bilayer. Residues Trp-133–Gln-334 are Periplasmic-facing. The tract at residues Leu-154–Gly-241 is disordered. 2 stretches are compositionally biased toward low complexity: residues Thr-176–Ala-211 and Thr-219–Gly-241.

Belongs to the RodZ family.

It is found in the cell inner membrane. Functionally, cytoskeletal protein that is involved in cell-shape control through regulation of the length of the long axis. The sequence is that of Cytoskeleton protein RodZ from Salmonella choleraesuis (strain SC-B67).